The primary structure comprises 223 residues: DNA-directed RNA polymerase III subunit RPC7 (223 aa).

Residues 110-223 (MMPRNKCKKA…SDDNMDEATY (114 aa)) are disordered. The segment covering 114 to 125 (NKCKKAGPKPKK) has biased composition (basic residues). Threonine 133 bears the Phosphothreonine mark. The segment covering 140–155 (DVLKKMEELEKRGDGE) has biased composition (basic and acidic residues). Serine 157 bears the Phosphoserine mark. Positions 164-173 (KEGSKEKSKE) are enriched in basic and acidic residues. Composition is skewed to acidic residues over residues 174-198 (GDDD…EEND) and 205-223 (EDGD…EATY).

The protein belongs to the eukaryotic RPC7 RNA polymerase subunit family. As to quaternary structure, component of the RNA polymerase III complex consisting of 17 subunits: a ten-subunit horseshoe-shaped catalytic core composed of POLR3A/RPC1, POLR3B/RPC2, POLR1C/RPAC1, POLR1D/RPAC2, POLR3K/RPC10, POLR2E/RPABC1, POLR2F/RPABC2, POLR2H/RPABC3, POLR2K/RPABC4 and POLR2L/RPABC5; a mobile stalk composed of two subunits POLR3H/RPC8 and CRCP/RPC9, protruding from the core and functioning primarily in transcription initiation; and additional subunits homologous to general transcription factors of the RNA polymerase II machinery, POLR3C/RPC3-POLR3F/RPC6-POLR3G/RPC7 heterotrimer required for transcription initiation and POLR3D/RPC4-POLR3E/RPC5 heterodimer involved in both transcription initiation and termination. Directly interacts with POLR3C/RPC62. Also found in a trimeric complex with POLR3C/RPC3 and POLR3GL. As to expression, barely detectable in differentiated tissues. Expressed in embryonic stem cells and in other dividing cells, such as some tumor cell lines.

The protein localises to the nucleus. It is found in the cytoplasm. Functionally, DNA-dependent RNA polymerase catalyzes the transcription of DNA into RNA using the four ribonucleoside triphosphates as substrates. Specific peripheric component of RNA polymerase III (Pol III) which synthesizes small non-coding RNAs including 5S rRNA, snRNAs, tRNAs and miRNAs from at least 500 distinct genomic loci. Acts as a long tether that bridges POLR3C/RPC3-POLR3F/RPC6-POLR3G/RPC7 heterotrimer and the mobile stalk of Pol III, coordinating the dynamics of Pol III stalk and clamp modules during the transition from apo to elongation state. Pol III exists as two alternative complexes defined by the mutually exclusive incorporation of subunit POLR3G/RPC7alpha or POLR3GL/RPC7beta. POLR3G/RPC7alpha modulates Pol III transcriptome by specifically enhancing the transcription of snaR-A non-coding RNAs. At resting state, occupies the active site of apo Pol III and keeps Pol III in an autoinhibitory mode, preventing non-specific transcription. Pol III plays a key role in sensing and limiting infection by intracellular bacteria and DNA viruses. Acts as a nuclear and cytosolic DNA sensor involved in innate immune response. Can sense non-self dsDNA that serves as template for transcription into dsRNA. The non-self RNA polymerase III transcripts, such as Epstein-Barr virus-encoded RNAs (EBERs), induce type I interferon and NF-kappa-B through the RIG-I pathway. The sequence is that of DNA-directed RNA polymerase III subunit RPC7 from Homo sapiens (Human).